The primary structure comprises 832 residues: Protein monoglycylase TTLL8 (832 aa).

Positions 1 to 13 are enriched in pro residues; sequence MSCPPTPNPPFRP. Disordered regions lie at residues 1 to 84 and 277 to 304; these read MSCP…QDLS and GKSK…KLPS. Basic and acidic residues-rich tracts occupy residues 46–59, 66–75, and 280–299; these read QLRE…ERKK, DGDHKEENKL, and KKEE…ENPD. The 354-residue stretch at 271-624 folds into the TTL domain; sequence YCSKVKGKSK…RKLDRNCDIG (354 aa). ATP-binding positions include K397, 403-404, 435-438, 448-450, and 492-493; these read RG, QKYI, KFD, and CN. R403 serves as a coordination point for a protein. An L-glutamate-binding site is contributed by S495. The Mg(2+) site is built by D570, E583, and N585. E583 contributes to the ATP binding site.

The cofactor is Mg(2+). As to expression, highly expressed in testis. Expressed in brain, heart, kidney, liver, lung, muscle, spleen and trachea. Expressed in sperm flagellum. In the brain, specifically expressed in ependymal cilia.

It localises to the cytoplasm. It is found in the cytoskeleton. Its subcellular location is the cell projection. The protein resides in the cilium. The protein localises to the cilium axoneme. It localises to the flagellum axoneme. It carries out the reaction L-glutamyl-[protein] + glycine + ATP = glycyl-L-glutamyl-[protein] + ADP + phosphate + H(+). Its function is as follows. Monoglycylase which modifies both tubulin and non-tubulin proteins, adding a single glycine on the gamma-carboxyl groups of specific glutamate residues to generate monoglycine side chains within the C-terminal tail of target proteins. Not involved in elongation step of the polyglycylation reaction. Preferentially monoglycylates alpha-tubulin over beta-tubulin. Together with TTLL3, mediates microtubule glycylation of primary and motile cilia, which is essential for their stability and maintenance. Together with TTLL3, glycylates sperm flagella which regulates axonemal dynein motor activity, thereby controlling flagellar beat, directional sperm swimming and male fertility. Monoglycylates non-tubulin proteins such as ANP32A, ANP32B, SET, NCL and NAP1. This is Protein monoglycylase TTLL8 from Mus musculus (Mouse).